The primary structure comprises 438 residues: Protein maelstrom 1 (438 aa).

A DNA-binding region (HMG box) is located at residues 2-69 (APKKRNGFMT…LERTAKKERL (68 aa)). The disordered stretch occupies residues 374-438 (KEMGSRDLSP…NMGAGKKIAR (65 aa)). Polar residues predominate over residues 381-391 (LSPSSSHQSVS).

Belongs to the maelstrom family.

The protein localises to the cytoplasm. The protein resides in the nucleus. Its function is as follows. Involved both in the piRNA and miRNA metabolic processes. As a component of the meiotic nuage, plays a central role during oogenesis by repressing transposable elements and preventing their mobilization, which is essential for the germline integrity. Repression of transposable elements is mediated via the piRNA metabolic process, which mediates the repression of transposable elements during meiosis by forming complexes composed of piRNAs and Piwi proteins and governs the repression of transposons. As a nuclear component, it is required for proper differentiation in the germline stem cell (GSC) lineage by repressing microRNA-7 (miR-7), thereby acting as an indirect regulator of bag-of-marbles (Bam). Acts by binding to the promoter of miR-7 gene and repressing its expression; miR-7 repression alleviates the Bam repression by miR-7, thereby allowing differentiation in the germline stem cell (GSC) lineage. This is Protein maelstrom 1 (mael1) from Drosophila persimilis (Fruit fly).